We begin with the raw amino-acid sequence, 973 residues long: Coatomer subunit beta (973 aa).

HEAT repeat units follow at residues histidine 98 to glutamate 133 and leucine 134 to histidine 170. Residue serine 181 is modified to Phosphoserine. 2 HEAT repeats span residues asparagine 279–glycine 317 and alanine 318–alanine 354. At serine 540 the chain carries Phosphoserine.

In terms of assembly, oligomeric complex that consists of at least the alpha, beta, beta', gamma, delta, epsilon and zeta subunits. The complex interacts with ARF1 and PAB1. In terms of processing, the N-terminus is blocked.

The protein localises to the cytoplasm. The protein resides in the golgi apparatus membrane. It localises to the cytoplasmic vesicle. It is found in the COPI-coated vesicle membrane. Functionally, the coatomer is a cytosolic protein complex that binds to dilysine motifs and reversibly associates with Golgi non-clathrin-coated vesicles, which further mediate biosynthetic protein transport from the ER, via the Golgi up to the trans Golgi network. Coatomer complex is required for budding from Golgi membranes, and is essential for the retrograde Golgi-to-ER transport of dilysine-tagged proteins. Required for mitochondrial morphology. This is Coatomer subunit beta (SEC26) from Saccharomyces cerevisiae (strain ATCC 204508 / S288c) (Baker's yeast).